We begin with the raw amino-acid sequence, 184 residues long: uncharacterized protein (184 aa).

The segment at 32 to 52 (PCPRSRTQGQSRRSETHTISR) is disordered.

The protein resides in the mitochondrion. This is an uncharacterized protein from Arabidopsis thaliana (Mouse-ear cress).